Here is a 175-residue protein sequence, read N- to C-terminus: Peptide deformylase (175 aa).

C98 and H140 together coordinate Fe cation. E141 is an active-site residue. H144 is a Fe cation binding site.

Belongs to the polypeptide deformylase family. It depends on Fe(2+) as a cofactor.

The catalysed reaction is N-terminal N-formyl-L-methionyl-[peptide] + H2O = N-terminal L-methionyl-[peptide] + formate. Functionally, removes the formyl group from the N-terminal Met of newly synthesized proteins. Requires at least a dipeptide for an efficient rate of reaction. N-terminal L-methionine is a prerequisite for activity but the enzyme has broad specificity at other positions. This is Peptide deformylase from Nitrobacter hamburgensis (strain DSM 10229 / NCIMB 13809 / X14).